Consider the following 260-residue polypeptide: Phosphatidate cytidylyltransferase (260 aa).

7 helical membrane-spanning segments follow: residues 9 to 29 (IIAL…LMLF), 46 to 66 (MIKF…IIML), 70 to 90 (AGEW…FIVL), 102 to 122 (FMDA…FMYF), 130 to 150 (LRYI…AYIF), 172 to 192 (FFGG…FVDL), and 196 to 216 (IWLL…GDLV).

It belongs to the CDS family.

It localises to the cell membrane. It catalyses the reaction a 1,2-diacyl-sn-glycero-3-phosphate + CTP + H(+) = a CDP-1,2-diacyl-sn-glycerol + diphosphate. Its pathway is phospholipid metabolism; CDP-diacylglycerol biosynthesis; CDP-diacylglycerol from sn-glycerol 3-phosphate: step 3/3. This Staphylococcus epidermidis (strain ATCC 35984 / DSM 28319 / BCRC 17069 / CCUG 31568 / BM 3577 / RP62A) protein is Phosphatidate cytidylyltransferase (cdsA).